A 343-amino-acid chain; its full sequence is Methylthioribose-1-phosphate isomerase (343 aa).

Residues Arg48–Ala50, Arg88, and Gln193 contribute to the substrate site. Catalysis depends on Asp234, which acts as the Proton donor. Residue Asn244 to Lys245 coordinates substrate.

It belongs to the eIF-2B alpha/beta/delta subunits family. MtnA subfamily.

The catalysed reaction is 5-(methylsulfanyl)-alpha-D-ribose 1-phosphate = 5-(methylsulfanyl)-D-ribulose 1-phosphate. Its pathway is amino-acid biosynthesis; L-methionine biosynthesis via salvage pathway; L-methionine from S-methyl-5-thio-alpha-D-ribose 1-phosphate: step 1/6. In terms of biological role, catalyzes the interconversion of methylthioribose-1-phosphate (MTR-1-P) into methylthioribulose-1-phosphate (MTRu-1-P). This is Methylthioribose-1-phosphate isomerase from Thermotoga maritima (strain ATCC 43589 / DSM 3109 / JCM 10099 / NBRC 100826 / MSB8).